A 351-amino-acid polypeptide reads, in one-letter code: MPFVDLEVPTMTTPTPAATPARPRVLTGDRPTGALHLGHLAGSLQNRVRLQDEAELFVLLADVQALTDHFDRPEQVRENVLAVALDYLAAGLDPQKTTCVVQSAVPELAELTVYFLNLVTVSHLRQNPTVKAEIAQKGYGERVPAGFFVYPVSQAADIAAFGATLVPVGDDQLPMLEQTREIVRRFNALYAPVLAEPQAQLSRVPRLPGLDGQAKMSKSLGNAIALGDSADEVARKVMGMYTDPGHLRASDPGRVEGNPVFTFLDAFDPDPARVQALKDQYRAGGLGDVKVKKHLIDVLNGVLAPIRTRRAEYERDPDAVLRFVTEGTARGREVAAQTLGQVRRAMRLFGH.

The tract at residues 1-24 (MPFVDLEVPTMTTPTPAATPARPR) is disordered. The span at 9 to 24 (PTMTTPTPAATPARPR) shows a compositional bias: low complexity. The short motif at 31–39 (PTGALHLGH) is the 'HIGH' region element. Residues 215–219 (KMSKS) carry the 'KMSKS' region motif. K218 contributes to the ATP binding site.

It belongs to the class-I aminoacyl-tRNA synthetase family. Homodimer. Forms a complex with nos; one homodimer of trpS2 binds one homodimer of nos.

It catalyses the reaction tRNA(Trp) + L-tryptophan + ATP = L-tryptophyl-tRNA(Trp) + AMP + diphosphate + H(+). Its function is as follows. Catalyzes the formation of 5'adenyl-Trp and tRNA(Trp) but with 5-fold less activity than TrpRS. Increases the solubility of the nitric oxide synthase oxygenase (nos), as well as its affinity for substrate L-arginine and its nitric-oxide synthase activity. The complex between trpS2 and nos catalyzes the regioselective nitration of tryptophan at the 4-position. The sequence is that of Tryptophan--tRNA ligase 2 (trpS2) from Deinococcus radiodurans (strain ATCC 13939 / DSM 20539 / JCM 16871 / CCUG 27074 / LMG 4051 / NBRC 15346 / NCIMB 9279 / VKM B-1422 / R1).